Consider the following 346-residue polypeptide: MTNKSSLSYKDAGVDIDAGNALVDRIKSVVKETRRPEVMGGLGGFGALCAIPTKYREPILVSGTDGVGTKLRLAMDLNRHDDIGIDLVAMCVNDLIVQGAEPLFFLDYYATGKLDVDTAARVVTGIAEGCKQSGCALVGGETAEMPGMYHGNDYDIAGFCVGVVEKSQIIDGSKVKAGDALIALASSGPHSNGYSLIRKILEVSGACAETTPLGDTSLADKLLAPTRIYVKSLLSLIENVDIHAVAHITGGGFWENIPRVLPENTQARINSQSWQWPEVFNWLQQAGNVSTHEMYRTFNCGVGLLIAVSQADVEKTLSHLNACGEKAWLIGDIAPQAAGDAQVIIN.

It belongs to the AIR synthase family.

It localises to the cytoplasm. It carries out the reaction 2-formamido-N(1)-(5-O-phospho-beta-D-ribosyl)acetamidine + ATP = 5-amino-1-(5-phospho-beta-D-ribosyl)imidazole + ADP + phosphate + H(+). It functions in the pathway purine metabolism; IMP biosynthesis via de novo pathway; 5-amino-1-(5-phospho-D-ribosyl)imidazole from N(2)-formyl-N(1)-(5-phospho-D-ribosyl)glycinamide: step 2/2. This Proteus mirabilis (strain HI4320) protein is Phosphoribosylformylglycinamidine cyclo-ligase.